The primary structure comprises 106 residues: Nucleoid-associated protein Nwi_0368 (106 aa).

This sequence belongs to the YbaB/EbfC family. In terms of assembly, homodimer.

Its subcellular location is the cytoplasm. The protein resides in the nucleoid. Functionally, binds to DNA and alters its conformation. May be involved in regulation of gene expression, nucleoid organization and DNA protection. In Nitrobacter winogradskyi (strain ATCC 25391 / DSM 10237 / CIP 104748 / NCIMB 11846 / Nb-255), this protein is Nucleoid-associated protein Nwi_0368.